The primary structure comprises 861 residues: MNLGTRYSPEQIEKKWYERWVEKGYFAPKGSGIPFVIVIPPPNITGRIHMGHALNITLQDILVRYKRMRGFDTLWVPGEDHAGIATQNAVERYLESQGKSREQLGREKFIEIVWEWAKKYRKEIRQQIETLGASVDWSRERFTLDDGLSKAVRKVFVDLYNRGLIYRGKYMVNWCPRCQTVLSDEEVEHIEESAKLYYVKYPFSGSNEYIVIATTRPETMLGDVAVAVNPEDERYKNISGKTVVLPLMNREIPIITDSYVDPEFGTGAVKITPAHDPNDFDIAKRHSLQFIEIFDNEAKINENGGKYAGLDRYQARKAVLEDLEKAGFLLKVENINHAVGHCYRCDSVIEPRIMDQWFVSMKSLSKRAIEAVENEEIRFVPERWKKVYLHWMYNIRDWCISRQLWWGHRVPVWYCKNCNETIVSEIDIEECPKCGSKSIEQDEDVLDTWFSSALWPFSTLGWPEKTEDLEKYYPTSVLVTGFDIIFFWVARMIIMGYQFMQKKPFTDVYIHQLIRDKHGRKMSKSLGNGIDPIDMSEKYGTDPVRFTLAIFAAQGSDIKLDERYFDTYRKFANKIWNAARFVLINLDNYKPQPLNELSLADRWILSKLQKVISVVSDAIEKYEFNIAARSLYEFFWNEFCDWYIESSKLVLNSEKKAITQNVLVKVLDTSLRLLHPFMPFLSEELWQNLPVHGESIVISDWPEVDVTLINEEAEKNFEKLVQIIRGIRNVKAEMNIPPKRNTKVYIYGETLCKEESSYIEHLSGAQISYVKEKPACCATAFVSENQHVYVDVAGLNLQSEIKRLMKNIEKLQKEREWQLKKLSDDKFLSNAPEEAISEARQKLSEIEDRLKILNQILGDLM.

A 'HIGH' region motif is present at residues 42–52; the sequence is PNITGRIHMGH. Residues 521 to 525 carry the 'KMSKS' region motif; the sequence is KMSKS. Residue lysine 524 participates in ATP binding. Residues 792–861 adopt a coiled-coil conformation; the sequence is VAGLNLQSEI…ILNQILGDLM (70 aa).

It belongs to the class-I aminoacyl-tRNA synthetase family. ValS type 1 subfamily. In terms of assembly, monomer.

The protein localises to the cytoplasm. It catalyses the reaction tRNA(Val) + L-valine + ATP = L-valyl-tRNA(Val) + AMP + diphosphate. Functionally, catalyzes the attachment of valine to tRNA(Val). As ValRS can inadvertently accommodate and process structurally similar amino acids such as threonine, to avoid such errors, it has a 'posttransfer' editing activity that hydrolyzes mischarged Thr-tRNA(Val) in a tRNA-dependent manner. The chain is Valine--tRNA ligase from Pseudothermotoga lettingae (strain ATCC BAA-301 / DSM 14385 / NBRC 107922 / TMO) (Thermotoga lettingae).